A 154-amino-acid polypeptide reads, in one-letter code: MGALTESQAALVKSSWEEFNANIPKHTHRFFILVLEIAPAAKDLFSFLKGTSEVPQNNPELQAHAGKVFKLVYEAAIQLQVTGVVVTDATLKNLGSVHVSKGVADAHFPVVKEAILKTIKEVVGAKWSEELNSAWTIAYDELAIVIKKEMNDAA.

The Globin domain maps to 3-151 (ALTESQAALV…LAIVIKKEMN (149 aa)). Ser46 lines the heme b pocket. Ser46 carries the post-translational modification Phosphoserine. His64 is a binding site for O2. Residues Lys67, His98, and Lys101 each coordinate heme b. Tyr139 carries the nitrated tyrosine modification.

The protein belongs to the plant globin family. In terms of assembly, monomer. Nitrated in effective nodules and particularly in hypoxic conditions; this mechanism may play a protective role in the symbiosis by buffering toxic peroxynitrite NO(2)(-). Nitration level decrease during nodule senescence. Post-translationally, phosphorylation at Ser-46 disrupts the molecular environment of its porphyrin ring oxygen binding pocket, thus leading to a reduced oxygen consumption and to the delivery of oxygen O(2) to symbiosomes. In terms of tissue distribution, root nodules.

Its subcellular location is the cytoplasm. The protein resides in the cytosol. The protein localises to the nucleus. Leghemoglobin that reversibly binds oxygen O(2) through a pentacoordinated heme iron. In root nodules, facilitates the diffusion of oxygen to the bacteroids while preventing the bacterial nitrogenase from being inactivated by buffering dioxygen, nitric oxide and carbon monoxide, and promoting the formation of reactive oxygen species (ROS, e.g. H(2)O(2)). This role is essential for symbiotic nitrogen fixation (SNF). This chain is Leghemoglobin-2, found in Lupinus luteus (European yellow lupine).